A 185-amino-acid polypeptide reads, in one-letter code: Peptidyl-tRNA hydrolase (185 aa).

Residue Tyr-14 coordinates tRNA. The active-site Proton acceptor is His-19. Positions 64, 66, and 112 each coordinate tRNA.

It belongs to the PTH family. In terms of assembly, monomer.

Its subcellular location is the cytoplasm. It catalyses the reaction an N-acyl-L-alpha-aminoacyl-tRNA + H2O = an N-acyl-L-amino acid + a tRNA + H(+). Functionally, hydrolyzes ribosome-free peptidyl-tRNAs (with 1 or more amino acids incorporated), which drop off the ribosome during protein synthesis, or as a result of ribosome stalling. Its function is as follows. Catalyzes the release of premature peptidyl moieties from peptidyl-tRNA molecules trapped in stalled 50S ribosomal subunits, and thus maintains levels of free tRNAs and 50S ribosomes. The polypeptide is Peptidyl-tRNA hydrolase (Lacticaseibacillus paracasei (strain ATCC 334 / BCRC 17002 / CCUG 31169 / CIP 107868 / KCTC 3260 / NRRL B-441) (Lactobacillus paracasei)).